We begin with the raw amino-acid sequence, 590 residues long: Arginine--tRNA ligase (590 aa).

Positions 131–141 (PNIAKEMHVGH) match the 'HIGH' region motif.

It belongs to the class-I aminoacyl-tRNA synthetase family. As to quaternary structure, monomer.

It is found in the cytoplasm. It carries out the reaction tRNA(Arg) + L-arginine + ATP = L-arginyl-tRNA(Arg) + AMP + diphosphate. The chain is Arginine--tRNA ligase from Synechococcus sp. (strain RCC307).